A 602-amino-acid polypeptide reads, in one-letter code: Lysine--tRNA ligase, chloroplastic/mitochondrial (602 aa).

The span at 50 to 62 shows a compositional bias: low complexity; sequence SSSSSSATTAETS. A disordered region spans residues 50–83; the sequence is SSSSSSATTAETSKPSGRNRRSASSSNSTSDREA. Residues 136 to 214 constitute a DNA-binding region (OB); it reads VSIAGRVVAR…SICVNSFSIL (79 aa). Residues G285 and E309 each coordinate substrate. ATP contacts are provided by residues 331–333 and 339–340; these read RNE and HN. Residues E347 and Y349 each coordinate substrate. Positions 492 and 499 each coordinate Ca(2+). 499 to 500 is a binding site for ATP; it reads EM. N502 and E506 together coordinate substrate. Positions 524–543 are enriched in basic and acidic residues; that stretch reads HNAKRAEAVRESPEPNAKKD. A disordered region spans residues 524–550; the sequence is HNAKRAEAVRESPEPNAKKDDDDDESY. 575–578 lines the ATP pocket; it reads GIDR.

Belongs to the class-II aminoacyl-tRNA synthetase family. It depends on Ca(2+) as a cofactor.

The protein localises to the plastid. Its subcellular location is the chloroplast. The protein resides in the mitochondrion. It carries out the reaction tRNA(Lys) + L-lysine + ATP = L-lysyl-tRNA(Lys) + AMP + diphosphate. In terms of biological role, catalyzes the specific attachment of an amino acid to its cognate tRNA in a 2 step reaction: the amino acid (AA) is first activated by ATP to form AA-AMP and then transferred to the acceptor end of the tRNA. The sequence is that of Lysine--tRNA ligase, chloroplastic/mitochondrial from Arabidopsis thaliana (Mouse-ear cress).